The sequence spans 370 residues: NSFL1 cofactor p47 (370 aa).

Residues 54–73 are disordered; it reads SQATPSSVSRGTAPSDNRVT. Residues Ser74, Ser102, and Ser114 each carry the phosphoserine modification. Disordered regions lie at residues 80-116 and 137-157; these read HDQDEDEEEEEGQRFYAGGSERSGQQIVGPPRKRSPN and VTKSPGETSKPRPFAGGGYRL. A Nuclear localization signal motif is present at residues 109–115; it reads PPRKRSP. Residue Ser140 is modified to Phosphoserine; by CDK1. Tyr167 carries the post-translational modification Phosphotyrosine. The short motif at 172–175 is the Nuclear localization signal element; it reads RRRH. Residues Ser176, Ser192, and Ser272 each carry the phosphoserine modification. An SEP domain is found at 179–244; the sequence is DVHVVLKLWK…MEDHRDEDFV (66 aa). Residues 272–292 are disordered; the sequence is SPAQQAENEAKASSSISIDES. The region spanning 291–368 is the UBX domain; it reads ESQPTTNIQI…NLLNAVIVQR (78 aa).

As to quaternary structure, part of a ternary complex containing STX5A, NSFL1C and VCP. NSFL1C forms a homotrimer that binds to one end of a VCP homohexamer. The complex binds to membranes enriched in phosphatidylethanolamine-containing lipids and promotes Golgi membrane fusion. Interaction with VCIP135 leads to dissociation of the complex via ATP hydrolysis by VCP. Binds ubiquitin and mono-ubiquitinated proteins via its N-terminal UBA-like domain when bound to VCP. Post-translationally, phosphorylated during mitosis. Phosphorylation inhibits interaction with Golgi membranes and is required for the fragmentation of the Golgi stacks during mitosis.

The protein resides in the nucleus. It localises to the golgi apparatus. The protein localises to the golgi stack. Its subcellular location is the chromosome. It is found in the cytoplasm. The protein resides in the cytoskeleton. It localises to the microtubule organizing center. The protein localises to the centrosome. Its function is as follows. Reduces the ATPase activity of VCP. Necessary for the fragmentation of Golgi stacks during mitosis and for VCP-mediated reassembly of Golgi stacks after mitosis. May play a role in VCP-mediated formation of transitional endoplasmic reticulum (tER). Inhibits the activity of CTSL (in vitro). Together with UBXN2B/p37, regulates the centrosomal levels of kinase AURKA/Aurora A during mitotic progression by promoting AURKA removal from centrosomes in prophase. Also, regulates spindle orientation during mitosis. In Bos taurus (Bovine), this protein is NSFL1 cofactor p47 (NSFL1C).